We begin with the raw amino-acid sequence, 251 residues long: Probable phosphatase Sama_2233 (251 aa).

His-8, His-10, His-16, His-41, Glu-74, His-102, His-132, Asp-193, and His-195 together coordinate Zn(2+).

It belongs to the PHP family. Zn(2+) serves as cofactor.

The protein is Probable phosphatase Sama_2233 of Shewanella amazonensis (strain ATCC BAA-1098 / SB2B).